Here is a 397-residue protein sequence, read N- to C-terminus: Subtilisin-like protease 12 (397 aa).

The signal sequence occupies residues methionine 1–alanine 19. A propeptide spanning residues alanine 20–alanine 116 is cleaved from the precursor. Residues tyrosine 35–valine 115 enclose the Inhibitor I9 domain. Asparagine 123, asparagine 136, and asparagine 150 each carry an N-linked (GlcNAc...) asparagine glycan. Positions threonine 125–alanine 397 constitute a Peptidase S8 domain. Active-site charge relay system residues include aspartate 157 and histidine 188. N-linked (GlcNAc...) asparagine glycosylation is found at asparagine 249, asparagine 305, and asparagine 334. The active-site Charge relay system is serine 343. Asparagine 385 and asparagine 393 each carry an N-linked (GlcNAc...) asparagine glycan.

It belongs to the peptidase S8 family.

It is found in the secreted. Functionally, secreted subtilisin-like serine protease with keratinolytic activity that contributes to pathogenicity. This Trichophyton verrucosum (strain HKI 0517) protein is Subtilisin-like protease 12 (SUB12).